A 149-amino-acid chain; its full sequence is Transcriptional repressor NrdR (149 aa).

A zinc finger lies at 3–34; that stretch reads CPFCAAVDTKVIDSRLVGDGSQVRRRRQCLVC. Residues 49-139 enclose the ATP-cone domain; it reads PRVIKSDEVR…VYRSFEDIRE (91 aa).

Belongs to the NrdR family. The cofactor is Zn(2+).

Negatively regulates transcription of bacterial ribonucleotide reductase nrd genes and operons by binding to NrdR-boxes. The polypeptide is Transcriptional repressor NrdR (Serratia proteamaculans (strain 568)).